Here is a 493-residue protein sequence, read N- to C-terminus: MTLVDKFVTHVISESSFEEMDRIYLTNRVLSRVGEGVLEVETNLDKLIDLKDQLVEETVRLETIEDSQTAREILGTELMDLVTPCPSQVNRDFWEAYAYSPEQAIEDFYQLSQKNDYIKLKAIAKNIAYRVPSDYGELEITINLSKPEKDPKEIAVAKLVQASNYPQCQLCLENEGYHGRVNHPARSNHRIIRFEMVGQEWGFQYSPYAYFNEHCIFLDGQHRPMAISRQSFERLLAIVEQFPGYFAGSNADLPIVGGSILTHDHYQGGRHVFPMELAPLQKTFRFAGFEQVKAGIIKWPMSVLRLTSDSKEDLINLADKIFQEWRQYSDSSVQILAETDGTPHHTITPIARKRDGQFELDLVLRDNQTSAEHPDGIYHPHKDVQHIKKENIGLIEVMGLAILPPRLKEEVEQVASYLVGEAVTVADYHQEWADQLKSQHPDLTDKEKALAIVKDSVGAIFVRVLEDAGVYKQTEQGQTAFMRFVEQVGILLD.

The protein belongs to the galactose-1-phosphate uridylyltransferase type 2 family.

The protein resides in the cytoplasm. The enzyme catalyses alpha-D-galactose 1-phosphate + UDP-alpha-D-glucose = alpha-D-glucose 1-phosphate + UDP-alpha-D-galactose. It functions in the pathway carbohydrate metabolism; galactose metabolism. The polypeptide is Galactose-1-phosphate uridylyltransferase 2 (galT2) (Streptococcus pneumoniae (strain ATCC BAA-255 / R6)).